The following is a 251-amino-acid chain: 2-C-methyl-D-erythritol 4-phosphate cytidylyltransferase (251 aa).

The protein belongs to the IspD/TarI cytidylyltransferase family. IspD subfamily.

It catalyses the reaction 2-C-methyl-D-erythritol 4-phosphate + CTP + H(+) = 4-CDP-2-C-methyl-D-erythritol + diphosphate. Its pathway is isoprenoid biosynthesis; isopentenyl diphosphate biosynthesis via DXP pathway; isopentenyl diphosphate from 1-deoxy-D-xylulose 5-phosphate: step 2/6. In terms of biological role, catalyzes the formation of 4-diphosphocytidyl-2-C-methyl-D-erythritol from CTP and 2-C-methyl-D-erythritol 4-phosphate (MEP). The polypeptide is 2-C-methyl-D-erythritol 4-phosphate cytidylyltransferase (Cupriavidus pinatubonensis (strain JMP 134 / LMG 1197) (Cupriavidus necator (strain JMP 134))).